We begin with the raw amino-acid sequence, 340 residues long: UDP-N-acetylenolpyruvoylglucosamine reductase (340 aa).

An FAD-binding PCMH-type domain is found at 14-185; it reads HVEATARWLL…VAVEFNLPLL (172 aa). Arg-162 is a catalytic residue. Ser-235 (proton donor) is an active-site residue. The active site involves Glu-332.

This sequence belongs to the MurB family. FAD serves as cofactor.

It localises to the cytoplasm. The catalysed reaction is UDP-N-acetyl-alpha-D-muramate + NADP(+) = UDP-N-acetyl-3-O-(1-carboxyvinyl)-alpha-D-glucosamine + NADPH + H(+). The protein operates within cell wall biogenesis; peptidoglycan biosynthesis. Its function is as follows. Cell wall formation. This is UDP-N-acetylenolpyruvoylglucosamine reductase from Xanthomonas oryzae pv. oryzae (strain KACC10331 / KXO85).